The following is a 112-amino-acid chain: Small ribosomal subunit protein bS6 (112 aa).

This sequence belongs to the bacterial ribosomal protein bS6 family.

Binds together with bS18 to 16S ribosomal RNA. The polypeptide is Small ribosomal subunit protein bS6 (Chlamydia felis (strain Fe/C-56) (Chlamydophila felis)).